A 362-amino-acid polypeptide reads, in one-letter code: Ferredoxin--NADP reductase 1 (362 aa).

The FAD site is built by Asp-47, Gln-55, Tyr-60, Ala-100, Phe-141, Asp-309, and Ser-350.

It belongs to the ferredoxin--NADP reductase type 2 family. In terms of assembly, homodimer. FAD is required as a cofactor.

It carries out the reaction 2 reduced [2Fe-2S]-[ferredoxin] + NADP(+) + H(+) = 2 oxidized [2Fe-2S]-[ferredoxin] + NADPH. This chain is Ferredoxin--NADP reductase 1, found in Cupriavidus pinatubonensis (strain JMP 134 / LMG 1197) (Cupriavidus necator (strain JMP 134)).